The following is a 174-amino-acid chain: MTLILGIDPGSRITGYGVVRDTGRGCVYVASGCIRTGSGELHERLQIVYRGVREVIKTYEPVTMGIEKVFMARNADSALKLGQARGAAIVAGAEEALEIAEYTATQVKQAVAGTGGANKEQVMMMVMHLLKLTQKPQIDASDALAIALCHAHTRSSLIPHGLGTARSRGGRLRL.

Residues Asp-8, Glu-67, and Asp-139 contribute to the active site. 3 residues coordinate Mg(2+): Asp-8, Glu-67, and Asp-139.

The protein belongs to the RuvC family. As to quaternary structure, homodimer which binds Holliday junction (HJ) DNA. The HJ becomes 2-fold symmetrical on binding to RuvC with unstacked arms; it has a different conformation from HJ DNA in complex with RuvA. In the full resolvosome a probable DNA-RuvA(4)-RuvB(12)-RuvC(2) complex forms which resolves the HJ. Mg(2+) serves as cofactor.

It is found in the cytoplasm. It catalyses the reaction Endonucleolytic cleavage at a junction such as a reciprocal single-stranded crossover between two homologous DNA duplexes (Holliday junction).. Functionally, the RuvA-RuvB-RuvC complex processes Holliday junction (HJ) DNA during genetic recombination and DNA repair. Endonuclease that resolves HJ intermediates. Cleaves cruciform DNA by making single-stranded nicks across the HJ at symmetrical positions within the homologous arms, yielding a 5'-phosphate and a 3'-hydroxyl group; requires a central core of homology in the junction. The consensus cleavage sequence is 5'-(A/T)TT(C/G)-3'. Cleavage occurs on the 3'-side of the TT dinucleotide at the point of strand exchange. HJ branch migration catalyzed by RuvA-RuvB allows RuvC to scan DNA until it finds its consensus sequence, where it cleaves and resolves the cruciform DNA. The protein is Crossover junction endodeoxyribonuclease RuvC of Pseudomonas syringae pv. syringae (strain B728a).